Here is a 781-residue protein sequence, read N- to C-terminus: Probable beta-D-xylosidase 5 (781 aa).

Residues 1-23 (MSIRRFVRLSLLIIALVSSLCES) form the signal peptide. N-linked (GlcNAc...) asparagine glycans are attached at residues Asn-43, Asn-103, and Asn-123. Asp-291 is a catalytic residue. N-linked (GlcNAc...) asparagine glycosylation is found at Asn-342, Asn-424, Asn-504, Asn-543, Asn-601, and Asn-653.

This sequence belongs to the glycosyl hydrolase 3 family.

It is found in the secreted. Its subcellular location is the extracellular space. The protein resides in the extracellular matrix. This Arabidopsis thaliana (Mouse-ear cress) protein is Probable beta-D-xylosidase 5 (BXL5).